The chain runs to 92 residues: Small ribosomal subunit protein uS19 (92 aa).

This sequence belongs to the universal ribosomal protein uS19 family.

In terms of biological role, protein S19 forms a complex with S13 that binds strongly to the 16S ribosomal RNA. This chain is Small ribosomal subunit protein uS19, found in Vibrio parahaemolyticus serotype O3:K6 (strain RIMD 2210633).